A 98-amino-acid polypeptide reads, in one-letter code: Parvalbumin beta 1 (98 aa).

Serine 1 bears the N-acetylserine mark. EF-hand domains lie at 32–67 (KIGL…FSAG) and 67–98 (GARA…MIKG). Positions 45, 47, 49, 51, 53, 56, 80, 82, 84, 86, and 91 each coordinate Ca(2+).

This sequence belongs to the parvalbumin family.

In terms of biological role, in muscle, parvalbumin is thought to be involved in relaxation after contraction. It binds two calcium ions. The protein is Parvalbumin beta 1 of Macruronus magellanicus (Patagonian grenadier).